The following is a 117-amino-acid chain: Large ribosomal subunit protein uL18 (117 aa).

This sequence belongs to the universal ribosomal protein uL18 family. Part of the 50S ribosomal subunit; part of the 5S rRNA/L5/L18/L25 subcomplex. Contacts the 5S and 23S rRNAs.

This is one of the proteins that bind and probably mediate the attachment of the 5S RNA into the large ribosomal subunit, where it forms part of the central protuberance. In Halorhodospira halophila (strain DSM 244 / SL1) (Ectothiorhodospira halophila (strain DSM 244 / SL1)), this protein is Large ribosomal subunit protein uL18.